Reading from the N-terminus, the 194-residue chain is Lysozyme g (194 aa).

Catalysis depends on residues Glu71 and Asp84.

This sequence belongs to the glycosyl hydrolase 23 family. As to expression, expressed in intestine, liver, spleen, anterior kidney, posterior kidney, heart, gill, muscle and leukocytes.

It carries out the reaction Hydrolysis of (1-&gt;4)-beta-linkages between N-acetylmuramic acid and N-acetyl-D-glucosamine residues in a peptidoglycan and between N-acetyl-D-glucosamine residues in chitodextrins.. Has lytic activity against M.lysodeikticus, V.alginolyticus from Epinephelus fario, V.vulnificus from culture water, A.hydrophila from soft-shell turtle, A.hydrophila from goldfish and V.parahaemolyticus, P.fluorescens and V.fluvialis from culture water. The chain is Lysozyme g from Epinephelus coioides (Orange-spotted grouper).